Consider the following 36-residue polypeptide: Glycine-rich protein GWK (36 aa).

The segment at 1-36 (YKRGGGGWGGGGGWKGGGGGGGGWKGGGGGGKGGGG) is disordered.

Functionally, possesses antifungal activity against a number of phytopathogenic fungi, including H.sativum and F.culmorum. The sequence is that of Glycine-rich protein GWK from Cucumis melo (Muskmelon).